We begin with the raw amino-acid sequence, 1389 residues long: DNA-directed RNA polymerase subunit beta (1389 aa).

This sequence belongs to the RNA polymerase beta chain family. As to quaternary structure, in plastids the minimal PEP RNA polymerase catalytic core is composed of four subunits: alpha, beta, beta', and beta''. When a (nuclear-encoded) sigma factor is associated with the core the holoenzyme is formed, which can initiate transcription.

The protein localises to the plastid. The protein resides in the chloroplast. The catalysed reaction is RNA(n) + a ribonucleoside 5'-triphosphate = RNA(n+1) + diphosphate. Its function is as follows. DNA-dependent RNA polymerase catalyzes the transcription of DNA into RNA using the four ribonucleoside triphosphates as substrates. The chain is DNA-directed RNA polymerase subunit beta from Phaeodactylum tricornutum (strain CCAP 1055/1).